Reading from the N-terminus, the 455-residue chain is MSYFGTDGIRGKFGELPITPDFILKLGYVTGLVLIENSQNSARKPSVVIGKDTRLSGYVIEGALQAGFNAAGVDVHMLGPLPTPAIAHLTRSFNADAGVVISASHNPYYDNGIKFFSGDGKKLTDEMQNAINDKLDTIMAATGSNDALMPILDPAQLGKNNRIDDAKGRYIEFCKGSFPYQYDLDHLTVVVDCANGAGYSVAPRVMRELGANVIAINHKPDGININAHCGSTHPEGLQAAVLKYEADVGIALDGDGDRIVMVDEAGHLVDGDGILYVLATQGQTKVAGVVGTLMSNMGLELALKAADIEFTRAKVGDRYVMQELEANGWILGGEPSGHILCLDKSRTGDAIIASLQILAVMQARGKALSDLTEGFEVLPQKLVNVRLSQMQDPFEHEELVAAFDKARATLEGRGRLLIRQSGTEPMIRVMVESDDEIECDVMANDLADKIKDTLG.

S104 (phosphoserine intermediate) is an active-site residue. The Mg(2+) site is built by S104, D253, D255, and D257. S104 is subject to Phosphoserine.

It belongs to the phosphohexose mutase family. It depends on Mg(2+) as a cofactor. Activated by phosphorylation.

It catalyses the reaction alpha-D-glucosamine 1-phosphate = D-glucosamine 6-phosphate. Catalyzes the conversion of glucosamine-6-phosphate to glucosamine-1-phosphate. This chain is Phosphoglucosamine mutase, found in Psychrobacter arcticus (strain DSM 17307 / VKM B-2377 / 273-4).